The following is a 65-amino-acid chain: Hirudin-3A (65 aa).

The segment at 1 to 3 (VVY) is interaction with thrombin active site. Intrachain disulfides connect C6-C14, C16-C28, and C22-C39. Positions 39–65 (CVTGEGTPKPQSHNDGDFEEIPEEYLQ) are disordered. Residue T45 is glycosylated (O-linked (GalNAc...) threonine). An interaction with fibrinogen-binding exosite of thrombin region spans residues 55-65 (DFEEIPEEYLQ). The segment covering 55–65 (DFEEIPEEYLQ) has biased composition (acidic residues). The residue at position 63 (Y63) is a Sulfotyrosine.

It belongs to the protease inhibitor I14 (hirudin) family.

Its subcellular location is the secreted. Functionally, hirudin is a potent thrombin-specific protease inhibitor. It forms a stable non-covalent complex with alpha-thrombin, thereby abolishing its ability to cleave fibrinogen. The chain is Hirudin-3A from Hirudo medicinalis (Medicinal leech).